The primary structure comprises 686 residues: NADH-ubiquinone oxidoreductase chain 5 (686 aa).

Helical transmembrane passes span 3 to 23 (LIIL…GRFV), 40 to 60 (ALLS…LFSF), 101 to 121 (ITLP…LFSV), 139 to 159 (LFTF…LFVG), 160 to 180 (WEGI…RIQA), 198 to 218 (LSIA…STVF), 222 to 242 (AYIN…GAMA), 261 to 281 (TPVS…YLLI), 293 to 313 (VLLV…TCGL), 321 to 341 (IIAF…GLSQ), 350 to 370 (LFHA…IHAF), 382 to 402 (LINF…SLLA), 432 to 452 (ILGS…ISLV), 472 to 492 (ITVI…GYVT), 526 to 546 (LIFK…ALYL), 635 to 655 (ALYI…PMLV), and 665 to 685 (LIIL…KKLS).

Belongs to the complex I subunit 5 family.

It is found in the mitochondrion inner membrane. The catalysed reaction is a ubiquinone + NADH + 5 H(+)(in) = a ubiquinol + NAD(+) + 4 H(+)(out). Its function is as follows. Core subunit of the mitochondrial membrane respiratory chain NADH dehydrogenase (Complex I) that is believed to belong to the minimal assembly required for catalysis. Complex I functions in the transfer of electrons from NADH to the respiratory chain. The immediate electron acceptor for the enzyme is believed to be ubiquinone. This chain is NADH-ubiquinone oxidoreductase chain 5 (ND5), found in Schizophyllum commune (Split gill fungus).